Here is a 318-residue protein sequence, read N- to C-terminus: Aspartate carbamoyltransferase catalytic subunit (318 aa).

Positions 58 and 59 each coordinate carbamoyl phosphate. Lysine 86 provides a ligand contact to L-aspartate. Residues arginine 108, histidine 141, and glutamine 144 each coordinate carbamoyl phosphate. Arginine 174 and arginine 226 together coordinate L-aspartate. Positions 270 and 271 each coordinate carbamoyl phosphate.

This sequence belongs to the aspartate/ornithine carbamoyltransferase superfamily. ATCase family. As to quaternary structure, heterododecamer (2C3:3R2) of six catalytic PyrB chains organized as two trimers (C3), and six regulatory PyrI chains organized as three dimers (R2).

It carries out the reaction carbamoyl phosphate + L-aspartate = N-carbamoyl-L-aspartate + phosphate + H(+). The protein operates within pyrimidine metabolism; UMP biosynthesis via de novo pathway; (S)-dihydroorotate from bicarbonate: step 2/3. Catalyzes the condensation of carbamoyl phosphate and aspartate to form carbamoyl aspartate and inorganic phosphate, the committed step in the de novo pyrimidine nucleotide biosynthesis pathway. In Lactobacillus helveticus (strain DPC 4571), this protein is Aspartate carbamoyltransferase catalytic subunit.